A 513-amino-acid chain; its full sequence is Maturase K (513 aa).

The protein belongs to the intron maturase 2 family. MatK subfamily.

It is found in the plastid. Its subcellular location is the chloroplast. In terms of biological role, usually encoded in the trnK tRNA gene intron. Probably assists in splicing its own and other chloroplast group II introns. The chain is Maturase K from Pinus parviflora (Japanese white pine).